Consider the following 406-residue polypeptide: Arginine deiminase (406 aa).

The active-site Amidino-cysteine intermediate is Cys396.

The protein belongs to the arginine deiminase family.

It localises to the cytoplasm. It carries out the reaction L-arginine + H2O = L-citrulline + NH4(+). It functions in the pathway amino-acid degradation; L-arginine degradation via ADI pathway; carbamoyl phosphate from L-arginine: step 1/2. This Vibrio vulnificus (strain YJ016) protein is Arginine deiminase.